Reading from the N-terminus, the 283-residue chain is MACGSSMNSFDMNSIPLVALNYTVRHRLCLYLNPNAVVAADWTRLAEEMGYDYLEIRNFDRYPDSTMKLLEDWQKKCFRATVGGLLEMLKKMERNDILTDLAPLIEADCKKYLEKKHGPLPLQDDNVDSSEQYRITKSDDPYGSMPETFDAFICCCAQDILFVQEMISRLEQTDYKLKLCVFDRDVLPGTCLWSITSELIENRCRKMVVIISDDYLDSSECDFQTKFALSLGPGAREKRLIPVKYKPMKRPFPSILRFITLCDNTNPYTKVWFWDKLAKALAR.

The 79-residue stretch at Arg27–Ile105 folds into the Death domain. Positions Glu106–Gly143 are intermediate domain. The 135-residue stretch at Glu147–Leu281 folds into the TIR domain.

It is found in the cytoplasm. Functionally, adapter protein involved in the Toll-like receptor and IL-1 receptor signaling pathway in the innate immune response. Activates expression of target genes in the Spemann organizer region during early embryonic development. Is required for normal axis formation. This Xenopus laevis (African clawed frog) protein is Myeloid differentiation primary response protein MyD88-B (myd88-b).